Consider the following 1058-residue polypeptide: Ubiquitin-like modifier-activating enzyme 1 Y (1058 aa).

The tract at residues 1-22 is disordered; sequence MSSSVLSKKRKVSGPDSSLDSS. Residues A477, D503, R514, K527, and 575-576 contribute to the ATP site; that span reads DN. C631 acts as the Glycyl thioester intermediate in catalysis.

Belongs to the ubiquitin-activating E1 family. As to quaternary structure, monomer. As to expression, expressed in testis in A spermatogonia and spermatids but not (or at very low levels) in pachytene spermatocytes. Also expressed in Y-bearing ovaries and at very low levels in adrenal gland.

The catalysed reaction is ATP + ubiquitin + [E1 ubiquitin-activating enzyme]-L-cysteine = AMP + diphosphate + S-ubiquitinyl-[E1 ubiquitin-activating enzyme]-L-cysteine.. The protein operates within protein modification; protein ubiquitination. In terms of biological role, activates ubiquitin by first adenylating its C-terminal glycine residue with ATP, and thereafter linking this residue to the side chain of a cysteine residue in E1, yielding a ubiquitin-E1 thioester and free AMP. The Y chromosome form could be involved in the survival and proliferation of differentiating spermatogonia. In Mus musculus (Mouse), this protein is Ubiquitin-like modifier-activating enzyme 1 Y (Uba1y).